Reading from the N-terminus, the 819-residue chain is Lon protease (819 aa).

The segment at 1 to 36 (MDSTTNSDSPILDPNPEDVEKLLDESEEESEDQSTE) is disordered. One can recognise a Lon N-terminal domain in the interval 43–240 (LFILPLNKRP…KALILLKKEL (198 aa)). 393-400 (GPPGVGKT) is an ATP binding site. The region spanning 635–817 (STPVGVATGL…DDVLKVAFPK (183 aa)) is the Lon proteolytic domain. Catalysis depends on residues Ser-723 and Lys-766.

It belongs to the peptidase S16 family. Homohexamer. Organized in a ring with a central cavity.

It localises to the cytoplasm. It carries out the reaction Hydrolysis of proteins in presence of ATP.. Its function is as follows. ATP-dependent serine protease that mediates the selective degradation of mutant and abnormal proteins as well as certain short-lived regulatory proteins. Required for cellular homeostasis and for survival from DNA damage and developmental changes induced by stress. Degrades polypeptides processively to yield small peptide fragments that are 5 to 10 amino acids long. Binds to DNA in a double-stranded, site-specific manner. This chain is Lon protease, found in Chlamydia pneumoniae (Chlamydophila pneumoniae).